The following is a 517-amino-acid chain: GMP synthase [glutamine-hydrolyzing] (517 aa).

The region spanning 11 to 202 (KIIVLDYGSQ…AFDICKAEAN (192 aa)) is the Glutamine amidotransferase type-1 domain. C88 serves as the catalytic Nucleophile. Active-site residues include H176 and E178. A GMPS ATP-PPase domain is found at 203–392 (WSMDDFITKQ…LGMPHALVWR (190 aa)). 230–236 (SGGVDSS) provides a ligand contact to ATP.

In terms of assembly, homodimer.

The enzyme catalyses XMP + L-glutamine + ATP + H2O = GMP + L-glutamate + AMP + diphosphate + 2 H(+). It functions in the pathway purine metabolism; GMP biosynthesis; GMP from XMP (L-Gln route): step 1/1. In terms of biological role, catalyzes the synthesis of GMP from XMP. In Lacticaseibacillus casei (strain BL23) (Lactobacillus casei), this protein is GMP synthase [glutamine-hydrolyzing].